The chain runs to 501 residues: Xylulose kinase (501 aa).

81–82 serves as a coordination point for substrate; it reads MH. The active-site Proton acceptor is the D239.

The protein belongs to the FGGY kinase family.

The enzyme catalyses D-xylulose + ATP = D-xylulose 5-phosphate + ADP + H(+). Its function is as follows. Catalyzes the phosphorylation of D-xylulose to D-xylulose 5-phosphate. In Lactococcus lactis subsp. lactis (strain IL1403) (Streptococcus lactis), this protein is Xylulose kinase.